The sequence spans 366 residues: tRNA/tmRNA (uracil-C(5))-methyltransferase (366 aa).

The S-adenosyl-L-methionine site is built by Q189, Y217, N222, E238, and D298. The Nucleophile role is filled by C323. Catalysis depends on E357, which acts as the Proton acceptor.

Belongs to the class I-like SAM-binding methyltransferase superfamily. RNA M5U methyltransferase family. TrmA subfamily.

It carries out the reaction uridine(54) in tRNA + S-adenosyl-L-methionine = 5-methyluridine(54) in tRNA + S-adenosyl-L-homocysteine + H(+). The catalysed reaction is uridine(341) in tmRNA + S-adenosyl-L-methionine = 5-methyluridine(341) in tmRNA + S-adenosyl-L-homocysteine + H(+). In terms of biological role, dual-specificity methyltransferase that catalyzes the formation of 5-methyluridine at position 54 (m5U54) in all tRNAs, and that of position 341 (m5U341) in tmRNA (transfer-mRNA). In Photorhabdus laumondii subsp. laumondii (strain DSM 15139 / CIP 105565 / TT01) (Photorhabdus luminescens subsp. laumondii), this protein is tRNA/tmRNA (uracil-C(5))-methyltransferase.